The chain runs to 1722 residues: Lymphocyte antigen 75 (1722 aa).

An N-terminal signal peptide occupies residues 1–27 (MGTRRVTPGCAAGLLVLLLRCFGLAEP). Residues 28-1666 (SEFSGDDSFT…VVCKVPLSPD (1639 aa)) are Extracellular-facing. Residues 32–182 (GDDSFTIVNE…FLVGETWHHD (151 aa)) enclose the Ricin B-type lectin domain. Residue asparagine 135 is glycosylated (N-linked (GlcNAc...) asparagine). The region spanning 164-211 (SYGRPCEFPFLVGETWHHDCIRDENHSGPWCATTLNYEYDQKWGICLK) is the Fibronectin type-II domain. Cystine bridges form between cysteine 169-cysteine 194, cysteine 183-cysteine 209, cysteine 247-cysteine 340, and cysteine 317-cysteine 332. Residues 225–341 (QIGSCYQFNN…CEAQQPYVCK (117 aa)) form the C-type lectin 1 domain. N-linked (GlcNAc...) asparagine glycans are attached at residues asparagine 345 and asparagine 377. 3 C-type lectin domains span residues 368–486 (QNGF…YVCK), 493–625 (NDTR…ICKK), and 652–791 (SNLS…WVCQ). 2 cysteine pairs are disulfide-bonded: cysteine 389-cysteine 485 and cysteine 462-cysteine 477. Asparagine 529 carries N-linked (GlcNAc...) asparagine glycosylation. Disulfide bonds link cysteine 597-cysteine 614, cysteine 678-cysteine 790, and cysteine 752-cysteine 782. Residues asparagine 843 and asparagine 865 are each glycosylated (N-linked (GlcNAc...) asparagine). Tyrosine 933 is subject to Phosphotyrosine. Residues asparagine 934 and asparagine 1076 are each glycosylated (N-linked (GlcNAc...) asparagine). C-type lectin domains follow at residues 958–1091 (FQNK…LCQK) and 1110–1222 (YLNN…ICYY). 2 disulfides stabilise this stretch: cysteine 1060/cysteine 1080 and cysteine 1197/cysteine 1211. Asparagine 1225, asparagine 1320, and asparagine 1392 each carry an N-linked (GlcNAc...) asparagine glycan. The C-type lectin 7 domain occupies 1251 to 1374 (FQNSCYNFMI…VIDETLHFYQ (124 aa)). C-type lectin domains lie at 1401 to 1513 (YEDG…ICYK) and 1542 to 1661 (YGDH…VCKV). A disulfide bridge connects residues cysteine 1488 and cysteine 1502. Asparagine 1593 and asparagine 1626 each carry an N-linked (GlcNAc...) asparagine glycan. Cysteine 1635 and cysteine 1650 form a disulfide bridge. Residues 1667–1691 (YRGIAVLFAVLSVLALISGLIWFLV) form a helical membrane-spanning segment. The Cytoplasmic portion of the chain corresponds to 1692-1722 (QRNHFRWTGLSSVRYEHGANEDEVMLPSFHD). Phosphoserine is present on residues serine 1703 and serine 1719.

Expressed in the thymus and cultured bone marrow cells.

The protein resides in the membrane. In terms of biological role, acts as an endocytic receptor to direct captured antigens from the extracellular space to a specialized antigen-processing compartment. Causes reduced proliferation of B lymphocytes. This Mesocricetus auratus (Golden hamster) protein is Lymphocyte antigen 75 (LY75).